The sequence spans 227 residues: ATP-dependent dethiobiotin synthetase BioD (227 aa).

13–18 is an ATP binding site; sequence DIGKTY. Threonine 17 is a Mg(2+) binding site. Lysine 38 is an active-site residue. Serine 42 serves as a coordination point for substrate. ATP contacts are provided by residues aspartate 55, 116–119, and 179–180; these read EGSG and NN. Mg(2+) contacts are provided by aspartate 55 and glutamate 116.

This sequence belongs to the dethiobiotin synthetase family. In terms of assembly, homodimer. Mg(2+) is required as a cofactor.

Its subcellular location is the cytoplasm. It carries out the reaction (7R,8S)-7,8-diammoniononanoate + CO2 + ATP = (4R,5S)-dethiobiotin + ADP + phosphate + 3 H(+). It participates in cofactor biosynthesis; biotin biosynthesis; biotin from 7,8-diaminononanoate: step 1/2. Its function is as follows. Catalyzes a mechanistically unusual reaction, the ATP-dependent insertion of CO2 between the N7 and N8 nitrogen atoms of 7,8-diaminopelargonic acid (DAPA, also called 7,8-diammoniononanoate) to form a ureido ring. This is ATP-dependent dethiobiotin synthetase BioD from Clostridium botulinum (strain ATCC 19397 / Type A).